We begin with the raw amino-acid sequence, 524 residues long: Coronin-2A (524 aa).

5 WD repeats span residues 80-120 (GHRG…LTRN), 130-170 (GHAR…SVIA), 178-217 (CHQD…VLQE), 220-263 (YKGH…VPLT), and 269-308 (GSSG…PHLT). The interval 403-436 (LLDSQTLPPERPLSNSMVQVSPQPLEPMKQPAED) is disordered. The span at 404 to 424 (LDSQTLPPERPLSNSMVQVSP) shows a compositional bias: polar residues. The stretch at 484–523 (QMFYRQQEEIRRLRELLIQREVQTKQLELEIKNLRMALGQ) forms a coiled coil.

It belongs to the WD repeat coronin family. As to quaternary structure, binds actin. Component of the N-Cor repressor complex, at least composed of NCOR1, NCOR2, HDAC3, TBL1X, TBL1R, CORO2A and GPS2.

The polypeptide is Coronin-2A (Coro2a) (Mus musculus (Mouse)).